Consider the following 1092-residue polypeptide: DNA polymerase delta catalytic subunit (1092 aa).

Residues 1 to 71 form a disordered region; the sequence is MDGKRKFNGT…SRPPPPELDP (71 aa). Residues 4–19 carry the Nuclear localization signal motif; sequence KRKFNGTSNGHAKKPR. C997, C1000, C1014, and C1017 together coordinate Zn(2+). Residues 997 to 1017 form a CysA-type zinc finger; that stretch reads CLGCKSLMPKGYEQACLCPHC. [4Fe-4S] cluster-binding residues include C1046, C1049, C1059, and C1064. The short motif at 1046 to 1064 is the CysB motif element; it reads CQRCQESLHEEVICSNRDC.

Belongs to the DNA polymerase type-B family. In terms of assembly, catalytic component of the DNA polymerase delta complex consisting of three subunits: the catalytic subunit PolD1 and two accessory subunits PolD2/Pol31 and PolD3/Pol32. Within the delta complex, interacts with both PolD2 and PolD3, and is able to interact with PolD2 in the absence of PolD3. Interacts with PCNA and PCNA2. [4Fe-4S] cluster serves as cofactor. It depends on Mg(2+) as a cofactor. In terms of tissue distribution, expressed in ovaries (at the protein level). Expressed in embryos (at the protein level).

The protein localises to the nucleus. The protein resides in the nucleoplasm. The catalysed reaction is DNA(n) + a 2'-deoxyribonucleoside 5'-triphosphate = DNA(n+1) + diphosphate. Inhibited by KCL. Also inhibited by carbonyldiphosphonate, aphidicolin and N-ethylmaleimide (NEM). As the catalytic component of the DNA polymerase delta complex, plays a crucial role in high fidelity genome replication, including lagging strand synthesis, DNA recombination and repair. Exhibits both DNA polymerase and 3'- to 5'-exonuclease activities. Required at the nucleus of rapidly dividing embryonic cells to activate genome replication during the earliest cell cycles. Likely to require the presence of accessory proteins PolD2 and PolD3 for full activity. The sequence is that of DNA polymerase delta catalytic subunit from Drosophila melanogaster (Fruit fly).